Consider the following 628-residue polypeptide: Serine/threonine-protein phosphatase 2A regulatory subunit psrA (628 aa).

Residues 1 to 22 (MKNDHINYQQNLSQSPILNSNK) are compositionally biased toward polar residues. Disordered regions lie at residues 1–61 (MKND…QIPF), 500–558 (KKKQ…DKPS), and 577–628 (SSHR…YTFT). Composition is skewed to low complexity over residues 23–58 (NQTQ…SPQQ) and 524–547 (QINQ…NNNN). Residues 600-618 (NNHTNHDSEIENEVKEDFR) show a composition bias toward basic and acidic residues.

The protein belongs to the phosphatase 2A regulatory subunit B56 family. As to quaternary structure, PP2A consists of a trimeric holoenzyme, composed of a 37 kDa catalytic subunit (C subunit) and a 65 kDa constant regulatory subunit (A subunit), that associates with a variety of regulatory subunits (B subunit) such as phr2AB (B55) and psrA (B56 homolog). The trimer may partially dissociates into a core 'AC' dimer equally active compared to the trimer. Seems to play a role in proper anterior patterning (pstO and pstAB).

The protein resides in the cytoplasm. The protein localises to the cytosol. Functionally, involved in developmental cell fate decision. The chain is Serine/threonine-protein phosphatase 2A regulatory subunit psrA (psrA) from Dictyostelium discoideum (Social amoeba).